The primary structure comprises 366 residues: Aminomethyltransferase (366 aa).

The protein belongs to the GcvT family. The glycine cleavage system is composed of four proteins: P, T, L and H.

The enzyme catalyses N(6)-[(R)-S(8)-aminomethyldihydrolipoyl]-L-lysyl-[protein] + (6S)-5,6,7,8-tetrahydrofolate = N(6)-[(R)-dihydrolipoyl]-L-lysyl-[protein] + (6R)-5,10-methylene-5,6,7,8-tetrahydrofolate + NH4(+). In terms of biological role, the glycine cleavage system catalyzes the degradation of glycine. This is Aminomethyltransferase from Bacillus cereus (strain 03BB102).